The following is a 222-amino-acid chain: uncharacterized protein (222 aa).

The next 7 membrane-spanning stretches (helical) occupy residues Tyr26 to Met46, Leu48 to Val68, Trp75 to Leu95, Val107 to Leu127, Phe139 to Ile159, Ile166 to Ile186, and Ile198 to Ala218.

The protein belongs to the BI1 family.

The protein localises to the cell membrane. This is an uncharacterized protein from Pseudomonas aeruginosa (strain ATCC 15692 / DSM 22644 / CIP 104116 / JCM 14847 / LMG 12228 / 1C / PRS 101 / PAO1).